Reading from the N-terminus, the 518-residue chain is WEB family protein At2g40480 (518 aa).

2 coiled-coil regions span residues 95–141 (DIKR…LQQE) and 188–219 (DNLV…AKLT). The segment at 303 to 337 (NGESQDDDSEFCFPEPPRSPVTPRGLRIDNDFSTD) is disordered. Residues 328-337 (LRIDNDFSTD) are compositionally biased toward basic and acidic residues. A coiled-coil region spans residues 344–375 (ILKKLEEATEGVKQSKQALEAALNRVEIANVK).

Belongs to the WEB family.

This chain is WEB family protein At2g40480, found in Arabidopsis thaliana (Mouse-ear cress).